A 251-amino-acid chain; its full sequence is 5-oxoprolinase subunit A (251 aa).

This sequence belongs to the LamB/PxpA family. In terms of assembly, forms a complex composed of PxpA, PxpB and PxpC.

It catalyses the reaction 5-oxo-L-proline + ATP + 2 H2O = L-glutamate + ADP + phosphate + H(+). Functionally, catalyzes the cleavage of 5-oxoproline to form L-glutamate coupled to the hydrolysis of ATP to ADP and inorganic phosphate. The polypeptide is 5-oxoprolinase subunit A (Vibrio parahaemolyticus serotype O3:K6 (strain RIMD 2210633)).